Reading from the N-terminus, the 103-residue chain is Small ribosomal subunit protein uS10 (103 aa).

Belongs to the universal ribosomal protein uS10 family. Part of the 30S ribosomal subunit.

Its function is as follows. Involved in the binding of tRNA to the ribosomes. The polypeptide is Small ribosomal subunit protein uS10 (Azoarcus sp. (strain BH72)).